Consider the following 194-residue polypeptide: Sigma factor AlgU negative regulatory protein (194 aa).

A helical membrane pass occupies residues 89–105 (LAVAASVTLAVLAGVRL).

It belongs to the RseA family.

It localises to the cell membrane. Functionally, negative regulator of the sigma factor AlgU. Plays a role in the differentiation of P.aeruginosa into the alginate-producing form. Inactivation of mucA causes a switch from the non-mucoid to mucoid state resulting in constitutive expression of alginate biosynthetic genes. The protein is Sigma factor AlgU negative regulatory protein (mucA) of Pseudomonas aeruginosa (strain ATCC 15692 / DSM 22644 / CIP 104116 / JCM 14847 / LMG 12228 / 1C / PRS 101 / PAO1).